A 174-amino-acid polypeptide reads, in one-letter code: MSLNLEQKKAVVAEVSEQVAQAQAIVLAEYRGIEVGDMTKLRAEARKSGVYLRVLKNTLVRRAVDGTQFSGLANDMVGPLVFGISADPVAAAKVLNNFAKANDKFVIKAGALPGKVLDAKGVQSLATLPSREELLAKLLGTMQAPVAQFVRTLNEVPTKFARGLAAVRDQKQAA.

Belongs to the universal ribosomal protein uL10 family. In terms of assembly, part of the ribosomal stalk of the 50S ribosomal subunit. The N-terminus interacts with L11 and the large rRNA to form the base of the stalk. The C-terminus forms an elongated spine to which L12 dimers bind in a sequential fashion forming a multimeric L10(L12)X complex.

Its function is as follows. Forms part of the ribosomal stalk, playing a central role in the interaction of the ribosome with GTP-bound translation factors. This Methylobacillus flagellatus (strain ATCC 51484 / DSM 6875 / VKM B-1610 / KT) protein is Large ribosomal subunit protein uL10.